Reading from the N-terminus, the 326-residue chain is Dolichyl-phosphate beta-glucosyltransferase (326 aa).

Residues 1–7 lie on the Lumenal side of the membrane; that stretch reads MWTCLCQ. A helical membrane pass occupies residues 8-28; that stretch reads LCFYLLSTLAVAALSIAALVL. Topologically, residues 29–326 are cytoplasmic; that stretch reads YKTKPYPNIK…RIASIQKKEK (298 aa).

Belongs to the glycosyltransferase 2 family.

The protein localises to the endoplasmic reticulum membrane. The catalysed reaction is a di-trans,poly-cis-dolichyl phosphate + UDP-alpha-D-glucose = a di-trans,poly-cis-dolichyl beta-D-glucosyl phosphate + UDP. It functions in the pathway protein modification; protein glycosylation. In terms of biological role, required for normal production of N-glycosylated proteins in the endoplasmic reticulum (ER). Required for embryonic segmentation, dorsal-ventral patterning and gastrulation. Required for chitin orientation and shaping of the apical and lateral plasma membranes of epidermal cells during cuticle differentiation. Also required for correctly shaping apical membrane topology of the epithelia of other organs such as the midgut and the hindgut. The protein is Dolichyl-phosphate beta-glucosyltransferase (wol) of Drosophila melanogaster (Fruit fly).